The chain runs to 398 residues: Elongation factor Tu (398 aa).

A tr-type G domain is found at 10–207; that stretch reads KPHVNIGTIG…TVDEYIPEPE (198 aa). The segment at 19-26 is G1; it reads GHVDHGKT. 19-26 serves as a coordination point for GTP; it reads GHVDHGKT. Residue Thr26 participates in Mg(2+) binding. The segment at 63 to 67 is G2; the sequence is GITIN. Positions 84 to 87 are G3; the sequence is DAPG. GTP contacts are provided by residues 84–88 and 139–142; these read DAPGH and NKVD. The segment at 139–142 is G4; the sequence is NKVD. The interval 177–179 is G5; sequence SAL.

It belongs to the TRAFAC class translation factor GTPase superfamily. Classic translation factor GTPase family. EF-Tu/EF-1A subfamily. In terms of assembly, monomer.

It localises to the cytoplasm. The enzyme catalyses GTP + H2O = GDP + phosphate + H(+). Its function is as follows. GTP hydrolase that promotes the GTP-dependent binding of aminoacyl-tRNA to the A-site of ribosomes during protein biosynthesis. The sequence is that of Elongation factor Tu from Streptococcus pneumoniae serotype 4 (strain ATCC BAA-334 / TIGR4).